The chain runs to 191 residues: ATP synthase subunit b 2 (191 aa).

Positions 1–12 (MAESHGEAKGGE) are enriched in basic and acidic residues. Residues 1–31 (MAESHGEAKGGEAKGTASAHTEAEGGHGFPP) form a disordered region. Residues 38–60 (PSQIASLVIAFVALYVIVSRVAL) form a helical membrane-spanning segment.

It belongs to the ATPase B chain family. As to quaternary structure, F-type ATPases have 2 components, F(1) - the catalytic core - and F(0) - the membrane proton channel. F(1) has five subunits: alpha(3), beta(3), gamma(1), delta(1), epsilon(1). F(0) has three main subunits: a(1), b(2) and c(10-14). The alpha and beta chains form an alternating ring which encloses part of the gamma chain. F(1) is attached to F(0) by a central stalk formed by the gamma and epsilon chains, while a peripheral stalk is formed by the delta and b chains.

It is found in the cell inner membrane. Its function is as follows. F(1)F(0) ATP synthase produces ATP from ADP in the presence of a proton or sodium gradient. F-type ATPases consist of two structural domains, F(1) containing the extramembraneous catalytic core and F(0) containing the membrane proton channel, linked together by a central stalk and a peripheral stalk. During catalysis, ATP synthesis in the catalytic domain of F(1) is coupled via a rotary mechanism of the central stalk subunits to proton translocation. Component of the F(0) channel, it forms part of the peripheral stalk, linking F(1) to F(0). The b'-subunit is a diverged and duplicated form of b found in plants and photosynthetic bacteria. This chain is ATP synthase subunit b 2 (atpF2), found in Bradyrhizobium sp. (strain ORS 278).